A 211-amino-acid chain; its full sequence is MGKNPVVIGIAGGSGSGKTSVTRSIYEQFKGHSILMIQQDLYYKDQSHLPFEERLNTNYDHPLAFDNDYLIEHIQDLLNYRPIEKPIYDYKLHTRSEETVHVEPKDVIILEGILVLEDKRLRDLMDIKLYVDTDADLRIIRRIMRDINERGRSIDSVIEQYVSVVRPMHNQFVEPTKRYADIIIPEGGQNHVAIDLMVTKIQTILEQNAIL.

An ATP-binding site is contributed by 12–19 (GGSGSGKT).

This sequence belongs to the uridine kinase family.

Its subcellular location is the cytoplasm. It catalyses the reaction uridine + ATP = UMP + ADP + H(+). The enzyme catalyses cytidine + ATP = CMP + ADP + H(+). Its pathway is pyrimidine metabolism; CTP biosynthesis via salvage pathway; CTP from cytidine: step 1/3. The protein operates within pyrimidine metabolism; UMP biosynthesis via salvage pathway; UMP from uridine: step 1/1. This is Uridine kinase (udk) from Bacillus subtilis (strain 168).